The following is a 457-amino-acid chain: Fibrinogen C domain-containing protein 1 (457 aa).

Positions 1-20 (MGSDRWKNIGGAPQMEDSVQ) are disordered. The Cytoplasmic portion of the chain corresponds to 1-33 (MGSDRWKNIGGAPQMEDSVQDKSQRKGCGYILC). A helical; Signal-anchor for type II membrane protein membrane pass occupies residues 34-54 (TVLLSVAVLLAVTVTGAVLFM). The Extracellular segment spans residues 55–457 (NHYHAPSTEP…MKIRPQREEN (403 aa)). Residues 211–235 (RPRVKADLQRAPSRSSRPRGCANGS) form a disordered region. The Fibrinogen C-terminal domain occupies 231–454 (CANGSKPRDC…FTEMKIRPQR (224 aa)). N233 carries N-linked (GlcNAc...) asparagine glycosylation. C240 and C269 are oxidised to a cystine. Residue N336 is glycosylated (N-linked (GlcNAc...) asparagine). Residues D389 and D391 each coordinate Ca(2+). A disulfide bond links C397 and C410.

In terms of assembly, homotetramer; disulfide-linked.

It localises to the membrane. In terms of biological role, acetyl group-binding receptor which shows a calcium-dependent binding to acetylated structures such as chitin, some N-acetylated carbohydrates, and amino acids. This chain is Fibrinogen C domain-containing protein 1 (fibcd1), found in Xenopus tropicalis (Western clawed frog).